Here is a 207-residue protein sequence, read N- to C-terminus: Small ribosomal subunit protein uS10m (207 aa).

The N-terminal 14 residues, 1 to 14, are a transit peptide targeting the mitochondrion; that stretch reads MNMFRQAVRSFVRY.

It belongs to the universal ribosomal protein uS10 family. In terms of assembly, part of the mitochondrial small ribosomal subunit.

The protein resides in the mitochondrion. In terms of biological role, involved in mitochondrial genome encoded proteins translation. Involved in the binding of tRNA to the ribosomes. The polypeptide is Small ribosomal subunit protein uS10m (RSM10) (Kluyveromyces lactis (strain ATCC 8585 / CBS 2359 / DSM 70799 / NBRC 1267 / NRRL Y-1140 / WM37) (Yeast)).